Consider the following 500-residue polypeptide: Glycerol kinase (500 aa).

Residue Thr14 coordinates ADP. Residues Thr14, Thr15, and Ser16 each contribute to the ATP site. Position 14 (Thr14) interacts with sn-glycerol 3-phosphate. Residue Arg18 participates in ADP binding. Residues Arg84, Glu85, and Tyr136 each coordinate sn-glycerol 3-phosphate. 3 residues coordinate glycerol: Arg84, Glu85, and Tyr136. Residue His232 is modified to Phosphohistidine; by HPr. Asp246 contacts sn-glycerol 3-phosphate. Glycerol-binding residues include Asp246 and Gln247. Positions 268 and 311 each coordinate ADP. Thr268, Gly311, Gln315, and Gly412 together coordinate ATP. Positions 412 and 416 each coordinate ADP.

It belongs to the FGGY kinase family. Homotetramer and homodimer (in equilibrium). In terms of processing, the phosphoenolpyruvate-dependent sugar phosphotransferase system (PTS), including enzyme I, and histidine-containing protein (HPr) are required for the phosphorylation, which leads to the activation of the enzyme.

It catalyses the reaction glycerol + ATP = sn-glycerol 3-phosphate + ADP + H(+). It participates in polyol metabolism; glycerol degradation via glycerol kinase pathway; sn-glycerol 3-phosphate from glycerol: step 1/1. Its activity is regulated as follows. Activated by phosphorylation and inhibited by fructose 1,6-bisphosphate (FBP). Key enzyme in the regulation of glycerol uptake and metabolism. Catalyzes the phosphorylation of glycerol to yield sn-glycerol 3-phosphate. The sequence is that of Glycerol kinase from Streptococcus uberis (strain ATCC BAA-854 / 0140J).